We begin with the raw amino-acid sequence, 363 residues long: Pyrimidine monooxygenase RutA (363 aa).

FMN-binding positions include 49–50 (IK), Asn115, Glu124, 140–141 (RY), and Ser190.

It belongs to the NtaA/SnaA/DszA monooxygenase family. RutA subfamily.

It carries out the reaction uracil + FMNH2 + NADH + O2 = (Z)-3-ureidoacrylate + FMN + NAD(+) + H2O + H(+). The catalysed reaction is thymine + FMNH2 + NADH + O2 = (Z)-2-methylureidoacrylate + FMN + NAD(+) + H2O + H(+). Functionally, catalyzes the pyrimidine ring opening between N-3 and C-4 by an unusual flavin hydroperoxide-catalyzed mechanism, adding oxygen atoms in the process to yield ureidoacrylate peracid, that immediately reacts with FMN forming ureidoacrylate and FMN-N(5)-oxide. The FMN-N(5)-oxide reacts spontaneously with NADH to produce FMN. Requires the flavin reductase RutF to regenerate FMN in vivo. The protein is Pyrimidine monooxygenase RutA of Escherichia coli O157:H7 (strain EC4115 / EHEC).